The sequence spans 215 residues: MTNGITILPHTETEHGTGALQALSDRLAETLGGAVVERAIAFDELTLVVEPSEIVRVLTHLRDDPACGFRSFIDICGADYPGREKRFDVVYHLLSLRHNRRIRVKVQTDEATPVPSVITVFPAANWYERETYDLYGILFSGHPDLRRLLTDYGFEGHPLRKDFPLTGFVEVRYDQDEGRVVYEPVKLSQEFRQFDFLSPWEGTDYVLPGDEKAKP.

The protein belongs to the complex I 30 kDa subunit family. As to quaternary structure, NDH-1 is composed of 14 different subunits. Subunits NuoB, C, D, E, F, and G constitute the peripheral sector of the complex.

It is found in the cell inner membrane. The enzyme catalyses a quinone + NADH + 5 H(+)(in) = a quinol + NAD(+) + 4 H(+)(out). Functionally, NDH-1 shuttles electrons from NADH, via FMN and iron-sulfur (Fe-S) centers, to quinones in the respiratory chain. The immediate electron acceptor for the enzyme in this species is believed to be ubiquinone. Couples the redox reaction to proton translocation (for every two electrons transferred, four hydrogen ions are translocated across the cytoplasmic membrane), and thus conserves the redox energy in a proton gradient. The chain is NADH-quinone oxidoreductase subunit C from Methylobacterium sp. (strain 4-46).